The following is a 220-amino-acid chain: N-(5'-phosphoribosyl)anthranilate isomerase (220 aa).

The protein belongs to the TrpF family.

The catalysed reaction is N-(5-phospho-beta-D-ribosyl)anthranilate = 1-(2-carboxyphenylamino)-1-deoxy-D-ribulose 5-phosphate. The protein operates within amino-acid biosynthesis; L-tryptophan biosynthesis; L-tryptophan from chorismate: step 3/5. This is N-(5'-phosphoribosyl)anthranilate isomerase from Xylella fastidiosa (strain M12).